We begin with the raw amino-acid sequence, 425 residues long: 2-methylserine hydroxymethyltransferase (425 aa).

Residues L126 and 130 to 132 (GHL) contribute to the (6S)-5,6,7,8-tetrahydrofolate site. K235 is subject to N6-(pyridoxal phosphate)lysine. E251 contacts (6S)-5,6,7,8-tetrahydrofolate.

The protein belongs to the SHMT family. Homodimer. Pyridoxal 5'-phosphate serves as cofactor.

The protein resides in the cytoplasm. It catalyses the reaction (6R)-5,10-methylene-5,6,7,8-tetrahydrofolate + D-alanine + H2O = 2-methylserine + (6S)-5,6,7,8-tetrahydrofolate. It participates in one-carbon metabolism; tetrahydrofolate interconversion. Its activity is regulated as follows. Inhibited by hydroxylamine and sodium borohydride. Catalyzes the reversible interconversion of alpha-methyl-L-serine to D-alanine with tetrahydrofolate (THF) serving as the one-carbon carrier. Cannot use alpha-methyl-D-serine, L-serine, D-serine or L-alanine. In Paracoccus sp, this protein is 2-methylserine hydroxymethyltransferase.